Reading from the N-terminus, the 391-residue chain is Phosphoprotein (391 aa).

Phosphothreonine occurs at positions 10, 16, and 39. Ser69 carries the post-translational modification Phosphoserine. Disordered regions lie at residues Ser82–Thr101 and Pro143–Val208. Phosphothreonine is present on residues Thr91, Thr150, and Thr165. Position 188 is a phosphoserine (Ser188). Residues Leu198 to Val208 are compositionally biased toward polar residues. The stretch at Ala218 to Gln245 forms a coiled coil. Thr250 carries the phosphothreonine modification. At Ser257 the chain carries Phosphoserine. 2 positions are modified to phosphothreonine: Thr258 and Thr282. Phosphoserine occurs at positions 292 and 294. At Thr298 the chain carries Phosphothreonine. Residues Ser301 and Ser374 each carry the phosphoserine modification. Residues Ala343–Ile391 are interaction with the nucleoprotein. The interval Met348–Ile391 is x domain (XD). Thr375 is subject to Phosphothreonine.

It belongs to the rubulavirus/avulavirus P protein family. In terms of assembly, homotetramer. Interacts (via multimerization domain) with polymerase L; this interaction forms the polymerase L-P complex. Interacts (via N-terminus) with N0 (via Ncore); this interaction allows P to chaperon N0 to avoid N polymerization before encapsidation. Interacts (via C-terminus) with N-RNA template; this interaction positions the polymerase on the template for both transcription and replication. Interacts with host RPS6KB1 kinase; this interaction may play a role in the viral replication and transcription.

The protein localises to the virion. Essential cofactor of the RNA polymerase L that plays a central role in the transcription and replication by forming the polymerase complex with RNA polymerase L and recruiting L to the genomic N-RNA template for RNA synthesis. Also plays a central role in the encapsidation of nascent RNA chains by forming the encapsidation complex with the nucleocapsid protein N (N-P complex). Acts as a chaperone for newly synthesized free N protein, so-called N0, allowing encapsidation of nascent RNA chains during replication. The nucleoprotein protein N prevents excessive phosphorylation of P, which leads to down-regulation of viral transcription/ replication. Participates, together with N, in the formation of viral factories (viroplasms), which are large inclusions in the host cytoplasm where replication takes place. The sequence is that of Phosphoprotein (V/P) from Mumps orthorubulavirus (MuV).